An 89-amino-acid polypeptide reads, in one-letter code: Probable Fe(2+)-trafficking protein (89 aa).

Belongs to the Fe(2+)-trafficking protein family.

Could be a mediator in iron transactions between iron acquisition and iron-requiring processes, such as synthesis and/or repair of Fe-S clusters in biosynthetic enzymes. The protein is Probable Fe(2+)-trafficking protein of Acinetobacter baumannii (strain AB0057).